A 172-amino-acid chain; its full sequence is Ribosome maturation factor RimM (172 aa).

One can recognise a PRC barrel domain in the interval Glu96–Leu169.

It belongs to the RimM family. In terms of assembly, binds ribosomal protein uS19.

It localises to the cytoplasm. An accessory protein needed during the final step in the assembly of 30S ribosomal subunit, possibly for assembly of the head region. Essential for efficient processing of 16S rRNA. May be needed both before and after RbfA during the maturation of 16S rRNA. It has affinity for free ribosomal 30S subunits but not for 70S ribosomes. This chain is Ribosome maturation factor RimM, found in Syntrophomonas wolfei subsp. wolfei (strain DSM 2245B / Goettingen).